A 241-amino-acid chain; its full sequence is Putative lipoprotein YvcA (241 aa).

An N-terminal signal peptide occupies residues 1–18; the sequence is MKKIIFICFSLLLALTGG. The N-palmitoyl cysteine moiety is linked to residue Cys-19. Residue Cys-19 is the site of S-diacylglycerol cysteine attachment. The segment at 22–48 is disordered; the sequence is NDNDKNSTNDNKTEAVKPKDMDPKDLP. Positions 23–46 are enriched in basic and acidic residues; sequence DNDKNSTNDNKTEAVKPKDMDPKD.

It is found in the cell membrane. In terms of biological role, required for complex colony architecture. This is Putative lipoprotein YvcA (yvcA) from Bacillus subtilis (strain 168).